Consider the following 363-residue polypeptide: Putative type I specificity subunit S.MpnORF507P (363 aa).

The protein belongs to the type-I restriction system S methylase family. In terms of assembly, the methyltransferase is composed of M and S polypeptides.

The specificity (S) subunit of a type I methyltransferase (MTase); this subunit dictates DNA sequence specificity. The single R subunit has multiple frameshifts and is probably not expressed. The protein is Putative type I specificity subunit S.MpnORF507P of Mycoplasma pneumoniae (strain ATCC 29342 / M129 / Subtype 1) (Mycoplasmoides pneumoniae).